A 903-amino-acid chain; its full sequence is DNA mismatch repair protein MutS (903 aa).

The disordered stretch occupies residues 1–89; sequence MPRSASQPPD…DEPAWGHHSQ (89 aa). Composition is skewed to low complexity over residues 20 to 36 and 49 to 62; these read APEP…SEPE and ADAA…QATA. 719 to 726 is a binding site for ATP; the sequence is GPNASGKS.

It belongs to the DNA mismatch repair MutS family.

This protein is involved in the repair of mismatches in DNA. It is possible that it carries out the mismatch recognition step. This protein has a weak ATPase activity. The sequence is that of DNA mismatch repair protein MutS from Synechococcus sp. (strain CC9605).